We begin with the raw amino-acid sequence, 2081 residues long: Non-reducing polyketide synthase terA (2081 aa).

The interval 85-190 is N-terminal acylcarrier protein transacylase (SAT) domain (SAT); sequence TLTLAFRIGV…ISLDIFAPFH (106 aa). A Ketosynthase family 3 (KS3) domain is found at 316–749; it reads AQKIAIVGMA…GGNTGLLLED (434 aa). Residues C488, H623, and H667 each act as for beta-ketoacyl synthase activity in the active site. Residues 849–1147 form a malonyl-CoA:ACP transacylase (MAT) domain region; that stretch reads LFTGQGSHYT…LTLPSLRKQE (299 aa). Residues 1230 to 1364 form an N-terminal hotdog fold region; sequence QKVIKEDFGQ…CHVEYGDIKT (135 aa). The PKS/mFAS DH domain maps to 1230 to 1539; it reads QKVIKEDFGQ…FKAIPRAVIN (310 aa). A product template (PT) domain region spans residues 1259 to 1536; sequence VTGHLVNGSA…GVKFKAIPRA (278 aa). The active-site Proton acceptor; for dehydratase activity is the H1262. Residues 1392 to 1539 are C-terminal hotdog fold; it reads YQKLDRKAAY…FKAIPRAVIN (148 aa). The active-site Proton donor; for dehydratase activity is the D1452. The segment at 1549 to 1578 is disordered; that stretch reads KALEKSAPRQNPKATATKTTQKPQAPVPVP. The segment covering 1558–1572 has biased composition (low complexity); that stretch reads QNPKATATKTTQKPQ. The Carrier 1 domain occupies 1580-1658; it reads KQNKAIIDDF…QVKELILKLA (79 aa). Residue S1617 is modified to O-(pantetheine 4'-phosphoryl)serine. Residues 1659–1700 are disordered; the sequence is GSSSDENTTDTPDEEEDPATADADNTEMIRENPLESVSPNVS. The span at 1665 to 1677 shows a compositional bias: acidic residues; it reads NTTDTPDEEEDPA. The 78-residue stretch at 1699 to 1776 folds into the Carrier 2 domain; sequence VSSSEAMDGF…QARLAIASLM (78 aa). S1736 is subject to O-(pantetheine 4'-phosphoryl)serine. Residues 1783–1809 are disordered; it reads GATTPYSGSDDAKSSTSSLTAGSVLTP. A thioesterase (TE) domain region spans residues 1840-2070; sequence TLFLLPDGSG…TMMREPKVNQ (231 aa).

The catalysed reaction is 3 malonyl-CoA + acetyl-CoA + 2 H(+) = orsellinate + 3 CO2 + 4 CoA. It participates in secondary metabolite biosynthesis. Non-reducing polyketide synthase; part of the gene cluster that mediates the biosynthesis of terrein, a fungal metabolite with ecological, antimicrobial, antiproliferative, and antioxidative activities. The first step in the pathway is performed by the polyketide synthase terA that produces 4-hydroxy-6-methylpyranon (4-HMP), orsellinic acid (OA), and 2,3-dehydro-6-hydroxymellein (2,3-dehydro-6-HM) by condensing acetyl-CoA with two, three, or four malonyl-CoA units, respectively. 4-HMP and OA are not pathway intermediates, but are rather shunt or side products. 2,3-dehydro-6-HM is further converted to 6-hydroxymellein (6-HM) by the 6-hydroxymellein synthase terB. The monooxygenases terC and terD, the multicopper oxidase terE and the Kelch-like protein terF are then involved in the transformation of 6-HM to terrein. Even if they are co-regulated with the other terrein cluster genes, terH and terI seem to be dispensable for terrein production; whereas one or both of the 2 transporters terG and terJ are probably required for efficient secretion of metabolites. In Aspergillus terreus (strain NIH 2624 / FGSC A1156), this protein is Non-reducing polyketide synthase terA.